Here is a 340-residue protein sequence, read N- to C-terminus: uncharacterized protein (340 aa).

2 helical membrane-spanning segments follow: residues 162-182 and 239-259; these read PLVPLVAGPLPVAFFIGVLAG and FWIALYFPLTMRSLCNAIVVP.

The protein resides in the cell membrane. This is an uncharacterized protein from Mycobacterium tuberculosis (strain CDC 1551 / Oshkosh).